The sequence spans 418 residues: Glutamyl-tRNA reductase (418 aa).

Residues 49-52, serine 107, 112-114, and glutamine 118 each bind substrate; these read TCNR and EPQ. Cysteine 50 acts as the Nucleophile in catalysis. Position 187-192 (187-192) interacts with NADP(+); sequence GAGETI.

The protein belongs to the glutamyl-tRNA reductase family. Homodimer.

It carries out the reaction (S)-4-amino-5-oxopentanoate + tRNA(Glu) + NADP(+) = L-glutamyl-tRNA(Glu) + NADPH + H(+). Its pathway is porphyrin-containing compound metabolism; protoporphyrin-IX biosynthesis; 5-aminolevulinate from L-glutamyl-tRNA(Glu): step 1/2. Catalyzes the NADPH-dependent reduction of glutamyl-tRNA(Glu) to glutamate 1-semialdehyde (GSA). The sequence is that of Glutamyl-tRNA reductase from Vibrio parahaemolyticus serotype O3:K6 (strain RIMD 2210633).